The chain runs to 201 residues: FMN-dependent NADH:quinone oxidoreductase (201 aa).

FMN contacts are provided by residues serine 9, 16-18 (SVS), and 93-96 (MYNF).

This sequence belongs to the azoreductase type 1 family. Homodimer. Requires FMN as cofactor.

It carries out the reaction 2 a quinone + NADH + H(+) = 2 a 1,4-benzosemiquinone + NAD(+). The enzyme catalyses N,N-dimethyl-1,4-phenylenediamine + anthranilate + 2 NAD(+) = 2-(4-dimethylaminophenyl)diazenylbenzoate + 2 NADH + 2 H(+). Functionally, quinone reductase that provides resistance to thiol-specific stress caused by electrophilic quinones. Its function is as follows. Also exhibits azoreductase activity. Catalyzes the reductive cleavage of the azo bond in aromatic azo compounds to the corresponding amines. This is FMN-dependent NADH:quinone oxidoreductase from Gluconacetobacter diazotrophicus (strain ATCC 49037 / DSM 5601 / CCUG 37298 / CIP 103539 / LMG 7603 / PAl5).